The following is a 183-amino-acid chain: Protein US32 (183 aa).

This sequence belongs to the herpesviridae US1 family.

The sequence is that of Protein US32 (US32) from Homo sapiens (Human).